Reading from the N-terminus, the 912-residue chain is Transferrin-binding protein A (912 aa).

Residues 1–23 (MTKKPYFRLSIISCLLISCYVKA) form the signal peptide. Residues 50-57 (ETISVTAE) carry the TonB box motif. A TBDR plug domain is found at 63 to 188 (KDNEVTGLGK…LAGSVTFQSK (126 aa)). The 714-residue stretch at 199–912 (SWGIQTKNAY…NYTLTLEMKF (714 aa)) folds into the TBDR beta-barrel domain. Positions 895 to 912 (TRYAASGRNYTLTLEMKF) match the TonB C-terminal box motif.

It belongs to the TonB-dependent receptor family.

It is found in the cell outer membrane. Functionally, haemophilus acquires iron by extracting it from serum transferrin (TF) in its human host. Acts as a transferrin receptor and is required for transferrin utilization. This is Transferrin-binding protein A from Haemophilus influenzae (strain ATCC 51907 / DSM 11121 / KW20 / Rd).